A 509-amino-acid polypeptide reads, in one-letter code: Maturase K (509 aa).

Belongs to the intron maturase 2 family. MatK subfamily.

Its subcellular location is the plastid. The protein localises to the chloroplast. Functionally, usually encoded in the trnK tRNA gene intron. Probably assists in splicing its own and other chloroplast group II introns. In Solanum bulbocastanum (Wild potato), this protein is Maturase K.